Consider the following 295-residue polypeptide: GTPase Era (295 aa).

The 168-residue stretch at 4–171 (KSGFVTIIGR…IKQIVSFLPE (168 aa)) folds into the Era-type G domain. Residues 12–19 (GRPNVGKS) form a G1 region. 12–19 (GRPNVGKS) contacts GTP. The segment at 38–42 (QTTRN) is G2. The G3 stretch occupies residues 59–62 (DTPG). GTP is bound by residues 59–63 (DTPGI) and 121–124 (NKID). Residues 121 to 124 (NKID) are G4. A G5 region spans residues 150 to 152 (ISA). The KH type-2 domain occupies 202 to 280 (LDQEIPHGIA…FLELWVKVNE (79 aa)).

This sequence belongs to the TRAFAC class TrmE-Era-EngA-EngB-Septin-like GTPase superfamily. Era GTPase family. In terms of assembly, monomer.

It localises to the cytoplasm. Its subcellular location is the cell membrane. An essential GTPase that binds both GDP and GTP, with rapid nucleotide exchange. Plays a role in 16S rRNA processing and 30S ribosomal subunit biogenesis and possibly also in cell cycle regulation and energy metabolism. This chain is GTPase Era, found in Alkaliphilus metalliredigens (strain QYMF).